We begin with the raw amino-acid sequence, 280 residues long: Phosphatidylserine decarboxylase proenzyme (280 aa).

Catalysis depends on charge relay system; for autoendoproteolytic cleavage activity residues Asp88, His145, and Ser249. Ser249 (schiff-base intermediate with substrate; via pyruvic acid; for decarboxylase activity) is an active-site residue. Position 249 is a pyruvic acid (Ser); by autocatalysis (Ser249).

Belongs to the phosphatidylserine decarboxylase family. PSD-B subfamily. Prokaryotic type I sub-subfamily. As to quaternary structure, heterodimer of a large membrane-associated beta subunit and a small pyruvoyl-containing alpha subunit. Pyruvate is required as a cofactor. Is synthesized initially as an inactive proenzyme. Formation of the active enzyme involves a self-maturation process in which the active site pyruvoyl group is generated from an internal serine residue via an autocatalytic post-translational modification. Two non-identical subunits are generated from the proenzyme in this reaction, and the pyruvate is formed at the N-terminus of the alpha chain, which is derived from the carboxyl end of the proenzyme. The autoendoproteolytic cleavage occurs by a canonical serine protease mechanism, in which the side chain hydroxyl group of the serine supplies its oxygen atom to form the C-terminus of the beta chain, while the remainder of the serine residue undergoes an oxidative deamination to produce ammonia and the pyruvoyl prosthetic group on the alpha chain. During this reaction, the Ser that is part of the protease active site of the proenzyme becomes the pyruvoyl prosthetic group, which constitutes an essential element of the active site of the mature decarboxylase.

It localises to the cell membrane. The catalysed reaction is a 1,2-diacyl-sn-glycero-3-phospho-L-serine + H(+) = a 1,2-diacyl-sn-glycero-3-phosphoethanolamine + CO2. Its pathway is phospholipid metabolism; phosphatidylethanolamine biosynthesis; phosphatidylethanolamine from CDP-diacylglycerol: step 2/2. Functionally, catalyzes the formation of phosphatidylethanolamine (PtdEtn) from phosphatidylserine (PtdSer). The polypeptide is Phosphatidylserine decarboxylase proenzyme (Chromobacterium violaceum (strain ATCC 12472 / DSM 30191 / JCM 1249 / CCUG 213 / NBRC 12614 / NCIMB 9131 / NCTC 9757 / MK)).